The chain runs to 608 residues: Pentatricopeptide repeat-containing protein At5g40410, mitochondrial (608 aa).

The transit peptide at Met-1–His-28 directs the protein to the mitochondrion. PPR repeat units lie at residues Leu-30 to Arg-64, His-65 to Arg-95, Asp-96 to Phe-130, Asn-133 to Glu-167, Glu-168 to Lys-198, Asn-199 to Pro-233, Asp-234 to Gly-268, Asn-269 to Pro-299, Asp-300 to Pro-334, Asp-335 to Arg-365, and Arg-371 to Glu-401. Residues Val-406–Gly-481 are type E motif. The interval Asn-482–Lys-512 is type E(+) motif. The interval Glu-514 to Trp-608 is type DYW motif.

Belongs to the PPR family. PCMP-H subfamily.

Its subcellular location is the mitochondrion. The polypeptide is Pentatricopeptide repeat-containing protein At5g40410, mitochondrial (PCMP-H15) (Arabidopsis thaliana (Mouse-ear cress)).